A 258-amino-acid polypeptide reads, in one-letter code: Aquaporin PIP1-2 (258 aa).

Residues 1–37 (MEGKEEDVRLGANKFTERQPIGTAAQSQDKDYKEPPP) form a disordered region. Topologically, residues 1-55 (MEGKEEDVRLGANKFTERQPIGTAAQSQDKDYKEPPPAPLFEPGELSSWSFYRAG) are cytoplasmic. A helical membrane pass occupies residues 56–76 (IAEFVATFLFLYITILTVMGV). Over 77–89 (VKSSTKCSTVGIQ) the chain is Extracellular. Residues 90–110 (GIAWAFGGMIFALVYCTAGIS) form a helical membrane-spanning segment. Residues 111–133 (GGHINPAVTFGLFLARKLSLTRA) are Cytoplasmic-facing. The short motif at 115–117 (NPA) is the NPA 1 element. A helical membrane pass occupies residues 134-154 (LFYMVMQCLGAICGAGVVKGF). At 155 to 175 (QKGLYENNGGGANVVAPGYTK) the chain is on the extracellular side. Residues 176-196 (GDGLGAEIVGTFILVYTVFSA) form a helical membrane-spanning segment. Residues 197–209 (TDAKRSARDSHVP) are Cytoplasmic-facing. A helical transmembrane segment spans residues 210–230 (ILAPLPIGFAVFLVHLATIPI). The Extracellular segment spans residues 231–258 (TGTGINPARSLGAAIIYNKGHAWDDHWI). The NPA 2 motif lies at 236–238 (NPA).

Belongs to the MIP/aquaporin (TC 1.A.8) family. PIP (TC 1.A.8.11) subfamily. As to expression, barely detectable in roots, leaves and fruits.

The protein localises to the cell membrane. In terms of biological role, water channel required to facilitate the transport of water across cell membrane; mercury-insensitive. Contributes to the tolerance to multiple abiotic stresses including salt (NaCl), cold and water deprivation, by modulating cytosolic K(+)/Na(+) ratio, maintaining osmotic balance, and reducing membrane injury (e.g. oxidative injury). The protein is Aquaporin PIP1-2 of Musa acuminata (Banana).